The following is a 374-amino-acid chain: tRNA N6-adenosine threonylcarbamoyltransferase (374 aa).

Residues His-117 and His-121 each contribute to the Fe cation site. Residues 140-144 (LVSGG), Asp-174, Gly-187, Asp-191, and Asn-283 contribute to the substrate site. Asp-311 contributes to the Fe cation binding site. Over residues 337 to 352 (ADSSLPVTEPHVPGQG) the composition is skewed to low complexity. A disordered region spans residues 337-374 (ADSSLPVTEPHVPGQGHPHGHPHGHDHVHEVSKENLYS). Residues 359 to 374 (HGHDHVHEVSKENLYS) show a composition bias toward basic and acidic residues.

Belongs to the KAE1 / TsaD family. The cofactor is Fe(2+).

The protein resides in the cytoplasm. It catalyses the reaction L-threonylcarbamoyladenylate + adenosine(37) in tRNA = N(6)-L-threonylcarbamoyladenosine(37) in tRNA + AMP + H(+). Required for the formation of a threonylcarbamoyl group on adenosine at position 37 (t(6)A37) in tRNAs that read codons beginning with adenine. Is involved in the transfer of the threonylcarbamoyl moiety of threonylcarbamoyl-AMP (TC-AMP) to the N6 group of A37, together with TsaE and TsaB. TsaD likely plays a direct catalytic role in this reaction. The sequence is that of tRNA N6-adenosine threonylcarbamoyltransferase from Streptomyces coelicolor (strain ATCC BAA-471 / A3(2) / M145).